We begin with the raw amino-acid sequence, 81 residues long: uncharacterized protein (81 aa).

The 45-residue stretch at 1-45 folds into the SpoVT-AbrB domain; it reads MRTTIDVAGRLVIPKRIRERLGLRGNDQVEITERDGRIEIEPAPT.

It to B.subtilis SpoVT.

This is an uncharacterized protein from Mycobacterium bovis (strain ATCC BAA-935 / AF2122/97).